The chain runs to 222 residues: Large ribosomal subunit protein uL4 (222 aa).

The segment at 67-87 (QKGTGNARAGSKRTNVRRGGG) is disordered.

This sequence belongs to the universal ribosomal protein uL4 family. As to quaternary structure, part of the 50S ribosomal subunit.

One of the primary rRNA binding proteins, this protein initially binds near the 5'-end of the 23S rRNA. It is important during the early stages of 50S assembly. It makes multiple contacts with different domains of the 23S rRNA in the assembled 50S subunit and ribosome. Functionally, forms part of the polypeptide exit tunnel. The sequence is that of Large ribosomal subunit protein uL4 from Rhodopirellula baltica (strain DSM 10527 / NCIMB 13988 / SH1).